Reading from the N-terminus, the 875-residue chain is MSRHHSRFERDYRIGWDRREWSVNGTHGATSVCSVTSGAGGSTASSLSARPGLLPLPVVPSRLPTPATAPAPCTTGSSEAITSLVVSSASAATTKAPGISKADNQSQGLTTSIRWGQTPVNQSTPWDTDEPPSKQMRESDNPGTGPWVTTVAAGNQPSLITHSYGVTQPPTFSPAVNVQAPVIGVTPSLPPHVGPQLPLIPGHYSLPQPPSQPLSSVVVNMPAQALYASPQPLAVSTLPGVGQVSRPGPTPVGNGHMAGPLLPPPPPAQPSAALPSSVPATNGPPTTDSAHGLQMLRTIGVGKYEFTDPGHPKEMLKELNQQRRAKAFTDLKIVVEGREFEVHQNVLASCSLYFKDLIQRSVQDSSQSSREKLELVLSNLQADVLELLLEFVYTGSLVIDSANAKTLLEAASKFQFHTFCKVCVSFLEKQLTASNCLGVLAMAEAMQCSELYHMAKAFALQIFPEVAAQEEILSISKDDFIAYVSNDSLNTKAEELVYETVIKWIKKDPATRAQYAAELLAAVRLPFIHPSYLLNVVDNEELIKSSEACRDLVNEAKRYHMLPHARQEMQTPRTRPRLSAGVAEVIVLVGGRQMVGMTQRSLVAVTCWNPQNNKWYPLASLPFYDREFFSVVSAGDNIYLSGGMESGVTLADVWCYMSLLDNWNLVSRMTVPRCRHNSLVYDGKIYTLGGLGVAGNVDHVERYDTITNQWEAVAPLPKAVHSAAATVCGGKIYVFGGVNEAGRAAGVLQSYVPQTNTWSFIESPMIDNKYAPAVTLNGFVFILGGAYARATTIYDPEKGNIKAGPNMNHSRQFCSAVVLDGKIYATGGIVSSEGPALGNMEAYEPTTNTWTLLPHMPCPVFRHGCVVIKKYIQSG.

Positions I113 to W126 are enriched in polar residues. 2 disordered regions span residues I113–G145 and G240–H291. Residues P131 to D140 show a composition bias toward basic and acidic residues. The segment covering P270–A280 has biased composition (low complexity). Residues T329–S401 enclose the BTB domain. Kelch repeat units lie at residues V585–G635, N637–G683, K684–G730, I732–G778, F779–G821, and K822–K870.

The protein is Kelch-like protein 29 (Klhl29) of Mus musculus (Mouse).